The primary structure comprises 344 residues: Dihydroorotase (344 aa).

The Zn(2+) site is built by H14 and H16. Substrate-binding positions include 16-18 (HLR) and N42. Residues K100, H137, and H175 each contribute to the Zn(2+) site. K100 bears the N6-carboxylysine mark. H137 contacts substrate. Residue L220 coordinates substrate. D248 is a binding site for Zn(2+). D248 is an active-site residue. Substrate contacts are provided by H252 and A264.

The protein belongs to the metallo-dependent hydrolases superfamily. DHOase family. Class II DHOase subfamily. In terms of assembly, homodimer. Zn(2+) serves as cofactor.

The catalysed reaction is (S)-dihydroorotate + H2O = N-carbamoyl-L-aspartate + H(+). Its pathway is pyrimidine metabolism; UMP biosynthesis via de novo pathway; (S)-dihydroorotate from bicarbonate: step 3/3. In terms of biological role, catalyzes the reversible cyclization of carbamoyl aspartate to dihydroorotate. This Ralstonia pickettii (strain 12J) protein is Dihydroorotase.